Here is a 913-residue protein sequence, read N- to C-terminus: MSRFFTTGSDSESESSLSGEELVTKPVGGNYGKQPLLLSEDEEDTKRVVRSAKDKRFEELTNLIRTIRNAMKIRDVTKCLEEFELLGKAYGKAKSIVDKEGVPRFYIRILADLEDYLNELWEDKEGKKKMNKNNAKALSTLRQKIRKYNRDFESHITSYKQNPEQSADEDAEKNEEDSEGSSDEDEDEDGVSAATFLKKKSEAPSGESRKFLKKMDDEDEDSEDSEDDEDWDTGSTSSDSDSEEEEGKQTALASRFLKKAPTTDEDKKAAEKKREDKAKKKHDRKSKRLDEEEEDNEGGEWERVRGGVPLVKEKPKMFAKGTEITHAVVIKKLNEILQARGKKGTDRAAQIELLQLLVQIAAENNLGEGVIVKIKFNIIASLYDYNPNLATYMKPEMWGKCLDCINELMDILFANPNIFVGENILEESENLHNADQPLRVRGCILTLVERMDEEFTKIMQNTDPHSQEYVEHLKDEAQVCAIIERVQRYLEEKGTTEEVCRIYLLRILHTYYKFDYKAHQRQLTPPEGSSKSEQDQAENEGEDSAVLMERLCKYIYAKDRTDRIRTCAILCHIYHHALHSRWYQARDLMLMSHLQDNIQHADPPVQILYNRTMVQLGICAFRQGLTMDAHNALLDIQSSGRAKELLGQGLLLRSLQERNQEQEKVERRRQVPFHLHINLELLECVYLVSAMLLEIPYMAAHESDARRRMISKQFHHQLRVGERQPLLGPPESMREHVVAASKAMKMGDWKTCHSFIINEKMNGKVWDLFPEADKVRTMLVRKIQEESLRTYLFTYSSVYDSISMETLSDMFELDLPTVHSIISKMIINEELMASLDQPTQTVVMHRTEPTAQQNLALQLAEKLGSLVENNERVFDHKQGTYGGYFRDQKDGYRKNEGYMRRGGYRQQQSQTAY.

The tract at residues 1–44 is disordered; sequence MSRFFTTGSDSESESSLSGEELVTKPVGGNYGKQPLLLSEDEED. The segment covering 8–21 has biased composition (low complexity); it reads GSDSESESSLSGEE. Phosphoserine is present on residues Ser9, Ser11, Ser13, Ser15, Ser16, Ser18, and Ser39. Position 99 is an N6-acetyllysine (Lys99). Disordered stretches follow at residues 157 to 301 and 522 to 542; these read TSYK…GGEW and QLTP…NEGE. A phosphoserine mark is found at Ser166, Ser178, Ser181, and Ser182. Residues 166–190 are compositionally biased toward acidic residues; that stretch reads SADEDAEKNEEDSEGSSDEDEDEDG. Positions 199–216 are enriched in basic and acidic residues; sequence KKSEAPSGESRKFLKKMD. A compositionally biased stretch (acidic residues) spans 217–232; that stretch reads DEDEDSEDSEDDEDWD. Positions 261 to 278 are enriched in basic and acidic residues; that stretch reads PTTDEDKKAAEKKREDKA. The segment covering 522-531 has biased composition (polar residues); that stretch reads QLTPPEGSSK. The residue at position 524 (Thr524) is a Phosphothreonine. N6-acetyllysine is present on Lys643. The PCI domain occupies 673-849; that stretch reads FHLHINLELL…QTVVMHRTEP (177 aa). A disordered region spans residues 885–913; the sequence is FRDQKDGYRKNEGYMRRGGYRQQQSQTAY. The segment covering 886–899 has biased composition (basic and acidic residues); sequence RDQKDGYRKNEGYM. Ser909 bears the Phosphoserine mark.

The protein belongs to the eIF-3 subunit C family. In terms of assembly, component of the eukaryotic translation initiation factor 3 (eIF-3) complex, which is composed of 13 subunits: EIF3A, EIF3B, EIF3C, EIF3D, EIF3E, EIF3F, EIF3G, EIF3H, EIF3I, EIF3J, EIF3K, EIF3L and EIF3M. The eIF-3 complex appears to include 3 stable modules: module A is composed of EIF3A, EIF3B, EIF3G and EIF3I; module B is composed of EIF3F, EIF3H, and EIF3M; and module C is composed of EIF3C, EIF3D, EIF3E, EIF3K and EIF3L. EIF3C of module C binds EIF3B of module A and EIF3H of module B, thereby linking the three modules. EIF3J is a labile subunit that binds to the eIF-3 complex via EIF3B. The eIF-3 complex interacts with RPS6KB1 under conditions of nutrient depletion. Mitogenic stimulation leads to binding and activation of a complex composed of MTOR and RPTOR, leading to phosphorylation and release of RPS6KB1 and binding of EIF4B to eIF-3. Interacts with ALKBH4, IFIT1 and IFIT2. Interacts with BZW2/5MP1. Post-translationally, phosphorylated. Phosphorylation is enhanced upon serum stimulation.

It localises to the cytoplasm. Functionally, component of the eukaryotic translation initiation factor 3 (eIF-3) complex, which is required for several steps in the initiation of protein synthesis. The eIF-3 complex associates with the 40S ribosome and facilitates the recruitment of eIF-1, eIF-1A, eIF-2:GTP:methionyl-tRNAi and eIF-5 to form the 43S pre-initiation complex (43S PIC). The eIF-3 complex stimulates mRNA recruitment to the 43S PIC and scanning of the mRNA for AUG recognition. The eIF-3 complex is also required for disassembly and recycling of post-termination ribosomal complexes and subsequently prevents premature joining of the 40S and 60S ribosomal subunits prior to initiation. The eIF-3 complex specifically targets and initiates translation of a subset of mRNAs involved in cell proliferation, including cell cycling, differentiation and apoptosis, and uses different modes of RNA stem-loop binding to exert either translational activation or repression. This is Eukaryotic translation initiation factor 3 subunit C from Pongo abelii (Sumatran orangutan).